Consider the following 396-residue polypeptide: Probable sugar efflux transporter (396 aa).

Transmembrane regions (helical) follow at residues 15 to 35 (VVTL…PVGL), 50 to 70 (VGIM…PFML), 81 to 101 (LICL…AWNF), 103 to 123 (VLVI…SITA), 136 to 156 (AQAL…GLPI), 169 to 189 (TFFA…KLLP), 202 to 222 (LPLL…VVVV), 246 to 266 (FATV…LVFG), 275 to 295 (SLVS…LPAA), 301 to 321 (LAIL…GMQV), 333 to 353 (VAMA…ALVG), and 364 to 384 (AIGY…VLIF).

The protein belongs to the major facilitator superfamily. SotB (TC 2.A.1.2) family.

The protein localises to the cell inner membrane. In terms of biological role, involved in the efflux of sugars. The physiological role may be the reduction of the intracellular concentration of toxic sugars or sugar metabolites. The sequence is that of Probable sugar efflux transporter from Salmonella paratyphi A (strain ATCC 9150 / SARB42).